A 338-amino-acid chain; its full sequence is 5-dehydro-2-deoxygluconokinase (338 aa).

This sequence belongs to the carbohydrate kinase PfkB family.

It carries out the reaction 5-dehydro-2-deoxy-D-gluconate + ATP = 6-phospho-5-dehydro-2-deoxy-D-gluconate + ADP + H(+). The protein operates within polyol metabolism; myo-inositol degradation into acetyl-CoA; acetyl-CoA from myo-inositol: step 5/7. Catalyzes the phosphorylation of 5-dehydro-2-deoxy-D-gluconate (2-deoxy-5-keto-D-gluconate or DKG) to 6-phospho-5-dehydro-2-deoxy-D-gluconate (DKGP). The polypeptide is 5-dehydro-2-deoxygluconokinase (Mesomycoplasma hyopneumoniae (strain 232) (Mycoplasma hyopneumoniae)).